Consider the following 388-residue polypeptide: Succinate--CoA ligase [ADP-forming] subunit beta (388 aa).

The region spanning 9-245 (KALLKEYGMP…KSQENERELK (237 aa)) is the ATP-grasp domain. Residues lysine 46, 53–55 (GRG), glutamate 100, tyrosine 103, and glutamate 108 contribute to the ATP site. Asparagine 200 and aspartate 214 together coordinate Mg(2+). Substrate contacts are provided by residues asparagine 265 and 322-324 (GIV).

Belongs to the succinate/malate CoA ligase beta subunit family. Heterotetramer of two alpha and two beta subunits. The cofactor is Mg(2+).

It carries out the reaction succinate + ATP + CoA = succinyl-CoA + ADP + phosphate. It catalyses the reaction GTP + succinate + CoA = succinyl-CoA + GDP + phosphate. The protein operates within carbohydrate metabolism; tricarboxylic acid cycle; succinate from succinyl-CoA (ligase route): step 1/1. Its function is as follows. Succinyl-CoA synthetase functions in the citric acid cycle (TCA), coupling the hydrolysis of succinyl-CoA to the synthesis of either ATP or GTP and thus represents the only step of substrate-level phosphorylation in the TCA. The beta subunit provides nucleotide specificity of the enzyme and binds the substrate succinate, while the binding sites for coenzyme A and phosphate are found in the alpha subunit. In Acinetobacter baumannii (strain SDF), this protein is Succinate--CoA ligase [ADP-forming] subunit beta.